Reading from the N-terminus, the 147-residue chain is Lysozyme C, tracheal isozyme (147 aa).

A signal peptide spans 1 to 18 (MKALLILGLLLLSVAVQG). The C-type lysozyme domain occupies 19–147 (KTFKRCELAK…LTSYVKGCGV (129 aa)). 4 disulfides stabilise this stretch: Cys24–Cys145, Cys48–Cys133, Cys83–Cys99, and Cys95–Cys113. Active-site residues include Glu53 and Asp71.

It belongs to the glycosyl hydrolase 22 family. In terms of assembly, monomer. Trachea.

The catalysed reaction is Hydrolysis of (1-&gt;4)-beta-linkages between N-acetylmuramic acid and N-acetyl-D-glucosamine residues in a peptidoglycan and between N-acetyl-D-glucosamine residues in chitodextrins.. In terms of biological role, lysozymes have primarily a bacteriolytic function; those in tissues and body fluids are associated with the monocyte-macrophage system and enhance the activity of immunoagents. The chain is Lysozyme C, tracheal isozyme from Bos taurus (Bovine).